The following is a 270-amino-acid chain: 3-methyl-2-oxobutanoate hydroxymethyltransferase (270 aa).

Mg(2+)-binding residues include Asp50 and Asp89. Residues 50-51, Asp89, and Lys118 each bind 3-methyl-2-oxobutanoate; that span reads DS. Glu120 is a Mg(2+) binding site. Glu187 acts as the Proton acceptor in catalysis.

Belongs to the PanB family. Homodecamer; pentamer of dimers. Requires Mg(2+) as cofactor.

It localises to the cytoplasm. The enzyme catalyses 3-methyl-2-oxobutanoate + (6R)-5,10-methylene-5,6,7,8-tetrahydrofolate + H2O = 2-dehydropantoate + (6S)-5,6,7,8-tetrahydrofolate. Its pathway is cofactor biosynthesis; (R)-pantothenate biosynthesis; (R)-pantoate from 3-methyl-2-oxobutanoate: step 1/2. Its function is as follows. Catalyzes the reversible reaction in which hydroxymethyl group from 5,10-methylenetetrahydrofolate is transferred onto alpha-ketoisovalerate to form ketopantoate. The polypeptide is 3-methyl-2-oxobutanoate hydroxymethyltransferase (Helicobacter pylori (strain Shi470)).